We begin with the raw amino-acid sequence, 425 residues long: Kynureninase (425 aa).

Pyridoxal 5'-phosphate is bound by residues Leu-105, Thr-106, 133 to 136 (FPSD), Asp-218, His-221, and Tyr-243. Residue Lys-244 is modified to N6-(pyridoxal phosphate)lysine. Residues Trp-274 and Asn-302 each coordinate pyridoxal 5'-phosphate.

It belongs to the kynureninase family. As to quaternary structure, homodimer. It depends on pyridoxal 5'-phosphate as a cofactor.

It carries out the reaction L-kynurenine + H2O = anthranilate + L-alanine + H(+). It catalyses the reaction 3-hydroxy-L-kynurenine + H2O = 3-hydroxyanthranilate + L-alanine + H(+). Its pathway is amino-acid degradation; L-kynurenine degradation; L-alanine and anthranilate from L-kynurenine: step 1/1. It functions in the pathway cofactor biosynthesis; NAD(+) biosynthesis; quinolinate from L-kynurenine: step 2/3. Functionally, catalyzes the cleavage of L-kynurenine (L-Kyn) and L-3-hydroxykynurenine (L-3OHKyn) into anthranilic acid (AA) and 3-hydroxyanthranilic acid (3-OHAA), respectively. This Flavobacterium johnsoniae (strain ATCC 17061 / DSM 2064 / JCM 8514 / BCRC 14874 / CCUG 350202 / NBRC 14942 / NCIMB 11054 / UW101) (Cytophaga johnsonae) protein is Kynureninase.